Here is a 304-residue protein sequence, read N- to C-terminus: Lipoprotein signal peptidase (304 aa).

The next 3 helical transmembrane spans lie at 28-48, 86-106, and 112-132; these read IKIK…IVFV, PAVP…TFIF, and LIVL…DRSV. Catalysis depends on residues Asp-148 and Asp-163. Residues 163–183 form a helical membrane-spanning segment; sequence DICIVTGFALIFLTFVVDIFL.

This sequence belongs to the peptidase A8 family.

It localises to the cell membrane. It catalyses the reaction Release of signal peptides from bacterial membrane prolipoproteins. Hydrolyzes -Xaa-Yaa-Zaa-|-(S,diacylglyceryl)Cys-, in which Xaa is hydrophobic (preferably Leu), and Yaa (Ala or Ser) and Zaa (Gly or Ala) have small, neutral side chains.. The protein operates within protein modification; lipoprotein biosynthesis (signal peptide cleavage). In terms of biological role, this protein specifically catalyzes the removal of signal peptides from prolipoproteins. This is Lipoprotein signal peptidase from Mycoplasmoides gallisepticum (strain R(low / passage 15 / clone 2)) (Mycoplasma gallisepticum).